Reading from the N-terminus, the 330-residue chain is Atypical chemokine receptor 1 (330 aa).

The Extracellular segment spans residues 1–57 (MGNCLYPVADDNSTKLAIKEDFLIDFPEDYYPDYNETDVEAAAPCHSCSLLNYSSLP). N-linked (GlcNAc...) asparagine glycosylation is found at Asn-12, Asn-35, and Asn-52. Intrachain disulfides connect Cys-45/Cys-270 and Cys-123/Cys-189. Residues 58–78 (FFILVSILGILASGTILYALL) traverse the membrane as a helical segment. Over 79–89 (RPLFRWQLYQD) the chain is Cytoplasmic. A helical membrane pass occupies residues 90–110 (RSTLVQLAVGSALFSIVVPIL). Residues 111–123 (ARGLSGALITSLC) lie on the Extracellular side of the membrane. The chain crosses the membrane as a helical span at residues 124–147 (HLAHLVAYGSAFAQALLIGYHACL). Residues 148–160 (GPQLGAGQVPGLR) lie on the Cytoplasmic side of the membrane. A helical membrane pass occupies residues 161-181 (LGVTVGLWGVAALLSLPVVLG). The Extracellular portion of the chain corresponds to 182–201 (SDTSQGLCTVTFSGEWETLR). A helical transmembrane segment spans residues 202 to 222 (YIHAAACFAIFVLLPLGLLGT). At 223-238 (KGLKTVLGRAPCPWVD) the chain is on the cytoplasmic side. The helical transmembrane segment at 239–259 (VLWVWFIFWWPQGMTLGLDSL) threads the bilayer. Residues 260 to 281 (VRSKAIVVSTCPAQQALDMLLD) lie on the Extracellular side of the membrane. Residues 282 to 302 (VAEALAILHCVATPLLLAWVC) form a helical membrane-spanning segment. At 303 to 330 (YQATHTSPPSLPLPTTQTSHLDTLGGKS) the chain is on the cytoplasmic side.

Belongs to the G-protein coupled receptor 1 family. Atypical chemokine receptor subfamily.

The protein localises to the early endosome. It localises to the recycling endosome. The protein resides in the membrane. Its function is as follows. Atypical chemokine receptor that controls chemokine levels and localization via high-affinity chemokine binding that is uncoupled from classic ligand-driven signal transduction cascades, resulting instead in chemokine sequestration, degradation, or transcytosis. Also known as interceptor (internalizing receptor) or chemokine-scavenging receptor or chemokine decoy receptor. Has a promiscuous chemokine-binding profile, interacting with inflammatory chemokines of both the CXC and the CC subfamilies but not with homeostatic chemokines. Acts as a receptor for chemokines including CCL2, CCL5, CCL7, CCL11, CCL13, CCL14, CCL17, CXCL5, CXCL6, IL8/CXCL8, CXCL11, GRO, RANTES, MCP-1 and TARC. May regulate chemokine bioavailability and, consequently, leukocyte recruitment through two distinct mechanisms: when expressed in endothelial cells, it sustains the abluminal to luminal transcytosis of tissue-derived chemokines and their subsequent presentation to circulating leukocytes; when expressed in erythrocytes, serves as blood reservoir of cognate chemokines but also as a chemokine sink, buffering potential surges in plasma chemokine levels. The chain is Atypical chemokine receptor 1 (ACKR1) from Bos taurus (Bovine).